Consider the following 451-residue polypeptide: Phosphoglucosamine mutase (451 aa).

The Phosphoserine intermediate role is filled by S107. Mg(2+) is bound by residues S107, D246, D248, and D250. S107 carries the post-translational modification Phosphoserine.

This sequence belongs to the phosphohexose mutase family. Mg(2+) serves as cofactor. Activated by phosphorylation.

It carries out the reaction alpha-D-glucosamine 1-phosphate = D-glucosamine 6-phosphate. In terms of biological role, catalyzes the conversion of glucosamine-6-phosphate to glucosamine-1-phosphate. The sequence is that of Phosphoglucosamine mutase from Burkholderia multivorans (strain ATCC 17616 / 249).